The primary structure comprises 1049 residues: RIMS-binding protein 2 (1049 aa).

One can recognise an SH3 1 domain in the interval 164-231; the sequence is GKVHLCVARY…PSNFVDFIQD (68 aa). 3 Fibronectin type-III domains span residues 294-387, 390-471, and 486-587; these read VPYP…GKDV, APSQ…EKDE, and PPQD…VPPA. 3 disordered regions span residues 580–664, 694–714, and 728–750; these read PDLL…VSTT, SAGP…EVKR, and LGQQ…GSDL. Residues 582 to 598 are compositionally biased toward pro residues; that stretch reads LLVPPAPHPRTAPPPKP. Over residues 603-616 the composition is skewed to basic and acidic residues; the sequence is MDTKDLGPHVKVDE. Residues 641 to 651 are compositionally biased toward low complexity; it reads GPGRRSPSPSR. 2 positions are modified to phosphoserine: Ser701 and Ser709. Residues 735-746 are compositionally biased toward basic and acidic residues; that stretch reads CHGDEYHTESSR. Ser832 and Ser839 each carry phosphoserine. Thr841 carries the phosphothreonine modification. SH3 domains are found at residues 848–916 and 952–1019; these read LPAR…EIHA and VPTR…EVPD. The interval 1024-1049 is disordered; sequence HLSDAPPHYSHDPPMRTKAKRVSQPP. The segment covering 1040 to 1049 has biased composition (basic residues); it reads TKAKRVSQPP.

Belongs to the RIMBP family. In terms of assembly, interacts with CACNA1D and CACNA1B, and potentially with other Ca(2+) channel alpha-1 isoforms. Interacts with RIMS1 and RIMS2.

The protein resides in the cell membrane. The protein localises to the synapse. Plays a role in the synaptic transmission as bifunctional linker that interacts simultaneously with RIMS1, RIMS2, CACNA1D and CACNA1B. The chain is RIMS-binding protein 2 (Rimbp2) from Rattus norvegicus (Rat).